We begin with the raw amino-acid sequence, 500 residues long: Raftlin-2 (500 aa).

The N-myristoyl glycine moiety is linked to residue Gly-2. Residue Cys-3 is the site of S-palmitoyl cysteine attachment. Residues 203–236 (GHLSESGVEEEPQHESGQHQTERNSSPSYANPKR) form a disordered region. The segment covering 213–224 (EPQHESGQHQTE) has biased composition (basic and acidic residues). Ser-404 bears the Phosphoserine mark. The tract at residues 406-500 (AQTPERKGSR…EEGVTQVTCM (95 aa)) is disordered. At Thr-408 the chain carries Phosphothreonine. A compositionally biased stretch (basic and acidic residues) spans 409–424 (PERKGSRLLKGEDRNK). Residues 426–438 (SSRSLGLDTNASQ) show a composition bias toward polar residues. Position 429 is a phosphoserine (Ser-429). Low complexity predominate over residues 467 to 478 (SDSFSGFSSSDS).

This sequence belongs to the raftlin family. In terms of tissue distribution, expressed in B-cells, heart, brain, spleen, large intestine and lung. Expressed in dendritic cells and macrophages.

The protein localises to the cell membrane. Functionally, upon bacterial lipopolysaccharide stimulation, mediates clathrin-dependent internalization of TLR4 in dendritic cells, resulting in activation of TICAM1-mediated signaling and subsequent IFNB1 production. May regulate B-cell antigen receptor-mediated signaling. This chain is Raftlin-2 (Rftn2), found in Mus musculus (Mouse).